The chain runs to 232 residues: Large ribosomal subunit protein uL1 (232 aa).

This sequence belongs to the universal ribosomal protein uL1 family. In terms of assembly, part of the 50S ribosomal subunit.

Binds directly to 23S rRNA. The L1 stalk is quite mobile in the ribosome, and is involved in E site tRNA release. Its function is as follows. Protein L1 is also a translational repressor protein, it controls the translation of the L11 operon by binding to its mRNA. The protein is Large ribosomal subunit protein uL1 of Thermosipho melanesiensis (strain DSM 12029 / CIP 104789 / BI429).